The chain runs to 393 residues: Protein Njmu-R1 (393 aa).

The interval 1 to 74 is disordered; the sequence is MLPSLQESLD…AETPSGDDFS (74 aa). Residues serine 8 and serine 18 each carry the phosphoserine modification. Acidic residues predominate over residues 9-24; it reads LDGDEKELESSEEGGS.

In terms of assembly, interacts with TBC1D23; this interaction may be indirect.

In terms of biological role, may have a role in spermatogenesis. This is Protein Njmu-R1 from Mus musculus (Mouse).